We begin with the raw amino-acid sequence, 298 residues long: MPEGKIIKALSGFYYVLDESEDSDKVIQCRGRGIFRKNKITPLVGDYVVYQAENDKEGYLMEIKERTNELIRPPICNVDQAVLVFSAVQPSFSTALLDRFLVLVEANDIQPIICITKMDLIEDQDTEDTIQAYAEDYRNIGYDVYLTSSKDQDSLADIIPHFQDKTTVFAGQSGVGKSSLLNAISPELGLRTNEISEHLGRGKHTTRHVELIHTSGGLVADTPGFSSLEFTDIEEEELGYTFPDIREKSSSCKFRGCLHLKEPKCAVKQAVEDGELKQYRYDHYVEFMTEIKDRKPRY.

Residues 67 to 228 (TNELIRPPIC…VADTPGFSSL (162 aa)) enclose the CP-type G domain. 116 to 119 (TKMD) lines the GTP pocket. At Thr-166 the chain carries Phosphothreonine. 171–179 (GQSGVGKSS) contributes to the GTP binding site. Zn(2+) contacts are provided by Cys-252, Cys-257, His-259, and Cys-265.

The protein belongs to the TRAFAC class YlqF/YawG GTPase family. RsgA subfamily. As to quaternary structure, monomer, but able to form dimers. Associates with 30S ribosomal subunit; a phospho-mimetic mutation increases association. Probably binds 16S rRNA. It depends on Zn(2+) as a cofactor. Post-translationally, in vitro phosphorylated mostly on Thr (with lower signal on Ser) by PrkC in the presence of poly-L-Lys or myelin basic protein, dephosphorylated by PrpC. Most in vitro phosphorylation occurs on Thr-166, in vivo phosphorylation has not been detected, but it might vary during the cell cycle.

Its subcellular location is the cytoplasm. In terms of biological role, one of several proteins that assist in the late maturation steps of the functional core of the 30S ribosomal subunit. Helps release RbfA from mature subunits. May play a role in the assembly of ribosomal proteins into the subunit. Circularly permuted GTPase with a low level of activity and slow catalytic turnover, does not act on ATP. GTPase activity is stimulated by the presence of 30S or 70S ribosomes, phosphorylation increases stimulation. Depletion results in increased sensitivity to protein synthesis inhibitors that block the peptide channel or peptidyl transferase center on the ribosome, suggesting this protein functions in conjunction with the ribosome in vivo. Decreasing levels of protein lead to an increase in free 30S and 50S ribosomal subunits and a decrease in assembled 70S ribosomes. Suggested to serve as a specific transcription factor for proteins involved in late stages of peptidoglycan synthesis. This chain is Small ribosomal subunit biogenesis GTPase RsgA, found in Bacillus subtilis (strain 168).